The primary structure comprises 513 residues: Cyclin-dependent kinase C-2 (513 aa).

In terms of domain architecture, Protein kinase spans 26-325 (FEKLEQIGEG…AKDALDAEYF (300 aa)). Residues 32–40 (IGEGTYGQV) and Lys55 each bind ATP. Tyr37 bears the Phosphotyrosine mark. The active-site Proton acceptor is Asp164. Thr198 carries the phosphothreonine modification. The tract at residues 337–513 (LPTYESSHEF…ARNQQYGWQP (177 aa)) is disordered. A compositionally biased stretch (low complexity) spans 395–404 (AGPNHPMNNN). Residues 434 to 448 (SGNQTGGYNNQSRGG) show a composition bias toward polar residues. Gly residues-rich tracts occupy residues 461–476 (APYG…GYGV) and 483–496 (QGGG…GSGR).

This sequence belongs to the protein kinase superfamily. CMGC Ser/Thr protein kinase family. CDC2/CDKX subfamily. Interacts with CYCT1-3. In terms of tissue distribution, highly expressed in flowers. Expressed in seedlings, roots, rosettes and stems.

It carries out the reaction L-seryl-[protein] + ATP = O-phospho-L-seryl-[protein] + ADP + H(+). The catalysed reaction is L-threonyl-[protein] + ATP = O-phospho-L-threonyl-[protein] + ADP + H(+). The enzyme catalyses [DNA-directed RNA polymerase] + ATP = phospho-[DNA-directed RNA polymerase] + ADP + H(+). The polypeptide is Cyclin-dependent kinase C-2 (CDKC-2) (Arabidopsis thaliana (Mouse-ear cress)).